The following is a 186-amino-acid chain: EF-hand protein 5 (186 aa).

Residues 1-23 (MSRSKEVSPNLSQQKRGDVRSAG) form a disordered region. 4 consecutive EF-hand domains span residues 41 to 76 (SAEL…GLHT), 77 to 112 (SEEE…GIDE), 113 to 148 (ASIA…SGEH), and 149 to 186 (SSAE…LNKM). Residues Glu98, Asp126, and Thr130 each contribute to the Ca(2+) site.

The polypeptide is EF-hand protein 5 (Leishmania tarentolae (Sauroleishmania tarentolae)).